The sequence spans 497 residues: Glycerol kinase (497 aa).

Thr-12 is a binding site for ADP. 3 residues coordinate ATP: Thr-12, Thr-13, and Ser-14. Thr-12 is a binding site for sn-glycerol 3-phosphate. Arg-16 serves as a coordination point for ADP. The sn-glycerol 3-phosphate site is built by Arg-82, Glu-83, Tyr-134, and Asp-243. Residues Arg-82, Glu-83, Tyr-134, Asp-243, and Gln-244 each coordinate glycerol. Residues Thr-265 and Gly-308 each contribute to the ADP site. Thr-265, Gly-308, Gln-312, and Gly-409 together coordinate ATP. The ADP site is built by Gly-409 and Asn-413.

The protein belongs to the FGGY kinase family.

It catalyses the reaction glycerol + ATP = sn-glycerol 3-phosphate + ADP + H(+). The protein operates within polyol metabolism; glycerol degradation via glycerol kinase pathway; sn-glycerol 3-phosphate from glycerol: step 1/1. Its activity is regulated as follows. Inhibited by fructose 1,6-bisphosphate (FBP). Key enzyme in the regulation of glycerol uptake and metabolism. Catalyzes the phosphorylation of glycerol to yield sn-glycerol 3-phosphate. The chain is Glycerol kinase from Oleidesulfovibrio alaskensis (strain ATCC BAA-1058 / DSM 17464 / G20) (Desulfovibrio alaskensis).